Consider the following 136-residue polypeptide: Outer envelope pore protein 16-4, chloroplastic (136 aa).

A contains 4 beta strands region spans residues 1 to 59 (MEEELLSAVPCSSLTVESVLRVATAGGLYGLCAGPRDARKIGLSGVSQASFVAKSIGRF). Transmembrane regions (helical) follow at residues 18–34 (SVLR…LCAG), 56–72 (IGRF…VFTM), 86–102 (WVNA…AVAI), and 110–126 (VVGM…LANC).

It belongs to the Tim17/Tim22/Tim23 family. Plastid outer envelope porin OEP16 (TC 1.B.30) subfamily. Homodimer and oligomers in membrane.

It localises to the plastid. Its subcellular location is the chloroplast outer membrane. Its function is as follows. Voltage-dependent high-conductance channel with a slight cation-selectivity; selective for amino acids but excludes triosephosphates or uncharged sugars. Non-essential amino acid-selective channel protein and translocation pore for NADPH:protochlorophyllide oxidoreductase A (PORA) and possibly PORB. The sequence is that of Outer envelope pore protein 16-4, chloroplastic (OEP164) from Arabidopsis thaliana (Mouse-ear cress).